A 378-amino-acid chain; its full sequence is Mitogen-activated protein kinase mpkC (378 aa).

Residues 20–300 form the Protein kinase domain; sequence YVNPQPIGMG…AQDALRYPYL (281 aa). ATP contacts are provided by residues 26–34 and K49; that span reads IGMGSFGLV. D141 serves as the catalytic Proton acceptor. T171 carries the phosphothreonine modification. The TXY motif lies at 171–173; sequence TGY. Y173 bears the Phosphotyrosine mark.

This sequence belongs to the protein kinase superfamily. Ser/Thr protein kinase family. MAP kinase subfamily. HOG1 sub-subfamily. As to quaternary structure, interacts with sakA upon osmotic and cell wall stresses. It depends on Mg(2+) as a cofactor. In terms of processing, dually phosphorylated on Thr-171 and Tyr-173, which activates the enzyme.

It is found in the cytoplasm. Its subcellular location is the nucleus. The enzyme catalyses L-seryl-[protein] + ATP = O-phospho-L-seryl-[protein] + ADP + H(+). It carries out the reaction L-threonyl-[protein] + ATP = O-phospho-L-threonyl-[protein] + ADP + H(+). Its activity is regulated as follows. Activated by tyrosine and threonine phosphorylation. Mitogen-activated protein kinase; part of an osmotic and general signal pathways involved in regulation of the response to the cell wall damage, oxidative stress, drug resistance, and establishment of infection. Required for growth on media where sorbitol or mannitol is the sole carbon source. With sakA, plays a redundant or cooperative role in the conidial stress resistance. Also plays a supportive role in osmotic stress adaptation when sakA is deficient. Involved in paradoxical growth, the cell wall integrity (CWI) pathway and biofilm formation. Acts by modulating sakA activity upon exposure to several types o stresses and during cell wall biosynthesis. Also collaborates with sakA to allow ful virulence in a neutropenic murine model of invasive pulmonary aspergillosis. MpkC and sakA have both independent and collaborative functions during the transcriptional response to transient osmotic stress, and mpkC plays a major role in the modulation of the response to DNA metabolism while activating mitochondrial functions and cation transport. The polypeptide is Mitogen-activated protein kinase mpkC (mpkC) (Aspergillus fumigatus (strain ATCC MYA-4609 / CBS 101355 / FGSC A1100 / Af293) (Neosartorya fumigata)).